Consider the following 360-residue polypeptide: Phenylalanine--tRNA ligase alpha subunit (360 aa).

E260 provides a ligand contact to Mg(2+).

This sequence belongs to the class-II aminoacyl-tRNA synthetase family. Phe-tRNA synthetase alpha subunit type 1 subfamily. As to quaternary structure, tetramer of two alpha and two beta subunits. Requires Mg(2+) as cofactor.

It localises to the cytoplasm. It catalyses the reaction tRNA(Phe) + L-phenylalanine + ATP = L-phenylalanyl-tRNA(Phe) + AMP + diphosphate + H(+). This Bradyrhizobium diazoefficiens (strain JCM 10833 / BCRC 13528 / IAM 13628 / NBRC 14792 / USDA 110) protein is Phenylalanine--tRNA ligase alpha subunit.